The sequence spans 864 residues: Mitochondrial 15S rRNA processing factor CCM1 (864 aa).

Residues 1 to 76 (MYMARCGPKN…REFSNTLKER (76 aa)) constitute a mitochondrion transit peptide. PPR repeat units follow at residues 319–353 (NKQNLTTVIQFYSRKEMTKQAWNTFDTMKFLSTKH) and 356–390 (DICTYNTMLRICEKERNFPKALDLFQEIQDHNIKP).

Belongs to the CCM1 family. As to quaternary structure, binds to mitochondrial small subunit 15S rRNA.

It is found in the mitochondrion. Functionally, regulates mitochondrial small subunit maturation by controlling 15S rRNA 5'-end processing. Localizes to the 5' precursor of the 15S rRNA in a position that is subsequently occupied by mS47 in the mature yeast mtSSU. Uses structure and sequence-specific RNA recognition, binding to a single-stranded region of the precursor and specifically recognizing bases -6 to -1. The exchange of Ccm1 for mS47 is coupled to the irreversible removal of precursor rRNA that is accompanied by conformational changes of the mitoribosomal proteins uS5m and mS26. These conformational changes signal completion of 5'-end rRNA processing through protection of the mature 5'-end of the 15S rRNA and stabilization of mS47. The removal of the 5' precursor together with the dissociation of Ccm1 may be catalyzed by the 5'-3' exoribonuclease Pet127. Involved in the specific removal of group I introns in mitochondrial encoded transcripts. In Saccharomyces cerevisiae (strain Lalvin EC1118 / Prise de mousse) (Baker's yeast), this protein is Mitochondrial 15S rRNA processing factor CCM1 (CCM1).